A 379-amino-acid polypeptide reads, in one-letter code: Tetraacyldisaccharide 4'-kinase (379 aa).

Residue 63–70 participates in ATP binding; the sequence is AVGGAGKT.

Belongs to the LpxK family.

The enzyme catalyses a lipid A disaccharide + ATP = a lipid IVA + ADP + H(+). The protein operates within glycolipid biosynthesis; lipid IV(A) biosynthesis; lipid IV(A) from (3R)-3-hydroxytetradecanoyl-[acyl-carrier-protein] and UDP-N-acetyl-alpha-D-glucosamine: step 6/6. Functionally, transfers the gamma-phosphate of ATP to the 4'-position of a tetraacyldisaccharide 1-phosphate intermediate (termed DS-1-P) to form tetraacyldisaccharide 1,4'-bis-phosphate (lipid IVA). The sequence is that of Tetraacyldisaccharide 4'-kinase from Anaeromyxobacter dehalogenans (strain 2CP-1 / ATCC BAA-258).